Reading from the N-terminus, the 175-residue chain is Transcription factor HES-3 (175 aa).

A bHLH domain is found at 1 to 49 (MEKKRRARINLSLEQLRSLLERHYSHQIRKRKLEKADILELSVKYVRSL). The Orange domain maps to 65-98 (YPSGFRGGLPGSSQRLRPGEDDSGLRCPLLLQRR). A compositionally biased stretch (low complexity) spans 124–145 (PGPPAGGSQSPQSPFPPLGGLL). Positions 124–175 (PGPPAGGSQSPQSPFPPLGGLLESSTGILAPPPASNCQAENPRPGFRVWRPW) are disordered. The WRPW motif signature appears at 172–175 (WRPW).

As to quaternary structure, transcription repression requires formation of a complex with a corepressor protein of the Groucho/TLE family. As to expression, expressed exclusively in Purkinje cells.

It is found in the nucleus. Functionally, transcriptional repressor of genes that require a bHLH protein for their transcription. The polypeptide is Transcription factor HES-3 (Hes3) (Rattus norvegicus (Rat)).